A 546-amino-acid polypeptide reads, in one-letter code: Hexose transporter HXT10 (546 aa).

Topologically, residues 1–44 (MVSSSVSILGTSAKASTSLSRKDEIKLTPETREASLDIPYKPII) are cytoplasmic. Residues 45–65 (AYWTVMGLCLMIAFGGFIFGW) form a helical membrane-spanning segment. Residues 66-100 (DTGTISGFINQTDFKRRFGELQRDGSFQLSDVRTG) are Extracellular-facing. N-linked (GlcNAc...) asparagine glycosylation is present at N75. The chain crosses the membrane as a helical span at residues 101–121 (LIVGIFNIGCALGGLTLGRLG). Residues 122–127 (DIYGRK) lie on the Cytoplasmic side of the membrane. Residues 128–148 (IGLMCVILVYVVGIVIQIASS) traverse the membrane as a helical segment. Topologically, residues 149-158 (DKWYQYFIGR) are extracellular. A helical transmembrane segment spans residues 159–179 (IVSGMGVGGVAVLSPTLISEI). Residues 180–185 (SPKHLR) are Cytoplasmic-facing. The helical transmembrane segment at 186–206 (GTCVSFYQLMITLGIFLGYCT) threads the bilayer. Over 207 to 220 (NYGTKKYSNSIQWR) the chain is Extracellular. Residues 221-241 (VPLGLCFAWAIFMVIGMVMVP) form a helical membrane-spanning segment. At 242-324 (ESPRYLVEKG…IQSLQQLTGC (83 aa)) the chain is on the cytoplasmic side. A helical transmembrane segment spans residues 325–341 (NYFFYYGTTIFNAVGMQ). Residues 342–347 (DSFETS) are Extracellular-facing. The chain crosses the membrane as a helical span at residues 348-365 (IVLGAVNFASTFVALYIV). Residues 366–372 (DKFGRRK) are Cytoplasmic-facing. Residues 373 to 393 (CLLWGSASMAICFVIFATVGV) traverse the membrane as a helical segment. The Extracellular portion of the chain corresponds to 394–415 (TRLWPQGKDQPSSQSAGNVMIV). The chain crosses the membrane as a helical span at residues 416 to 436 (FTCFFIFSFAITWAPIAYVIV). At 437–453 (AETYPLRVKNRAMAIAV) the chain is on the cytoplasmic side. A helical transmembrane segment spans residues 454-474 (GANWMWGFLIGFFTPFITRSI). A topological domain (extracellular) is located at residue G475. A helical membrane pass occupies residues 476–496 (FSYGYVFMGCLIFSYFYVFFF). Topologically, residues 497-546 (VCETKGLTLEEVNEMYEERIKPWKSGGWIPSSRRTPQPTSSTPLVIVDSK) are cytoplasmic.

Belongs to the major facilitator superfamily. Sugar transporter (TC 2.A.1.1) family.

The protein localises to the membrane. Functionally, probable glucose transporter. The protein is Hexose transporter HXT10 (HXT10) of Saccharomyces cerevisiae (strain ATCC 204508 / S288c) (Baker's yeast).